Reading from the N-terminus, the 1004-residue chain is 2-oxoglutarate dehydrogenase E1 component (1004 aa).

The protein belongs to the alpha-ketoglutarate dehydrogenase family. As to quaternary structure, homodimer. Part of the 2-oxoglutarate dehydrogenase (OGDH) complex composed of E1 (2-oxoglutarate dehydrogenase), E2 (dihydrolipoamide succinyltransferase) and E3 (dihydrolipoamide dehydrogenase); the complex contains multiple copies of the three enzymatic components (E1, E2 and E3). Thiamine diphosphate is required as a cofactor.

It carries out the reaction N(6)-[(R)-lipoyl]-L-lysyl-[protein] + 2-oxoglutarate + H(+) = N(6)-[(R)-S(8)-succinyldihydrolipoyl]-L-lysyl-[protein] + CO2. Its function is as follows. E1 component of the 2-oxoglutarate dehydrogenase (OGDH) complex which catalyzes the decarboxylation of 2-oxoglutarate, the first step in the conversion of 2-oxoglutarate to succinyl-CoA and CO(2). In Brucella ovis (strain ATCC 25840 / 63/290 / NCTC 10512), this protein is 2-oxoglutarate dehydrogenase E1 component.